Consider the following 505-residue polypeptide: Catalase (505 aa).

Residues 1-25 (MSRQDKKLTGVFGHPVSDRENSMTA) are disordered. Residues H56 and N129 contribute to the active site. Y339 serves as a coordination point for heme.

Belongs to the catalase family. As to quaternary structure, homodimer. It depends on heme as a cofactor.

It carries out the reaction 2 H2O2 = O2 + 2 H2O. In terms of biological role, decomposes hydrogen peroxide into water and oxygen; serves to protect cells from the toxic effects of hydrogen peroxide. The sequence is that of Catalase (katA) from Staphylococcus aureus (strain MRSA252).